A 67-amino-acid polypeptide reads, in one-letter code: MAGQEQQQPQSRESEFEDDAPATPPAPGEAQASAATQGVDDLLDEIDGVLESNAEEFVRAFVQKGGQ.

The segment covering 1-11 has biased composition (low complexity); the sequence is MAGQEQQQPQS. Positions 1–47 are disordered; it reads MAGQEQQQPQSRESEFEDDAPATPPAPGEAQASAATQGVDDLLDEID. The ARC ATPase binding stretch occupies residues 25 to 61; sequence PAPGEAQASAATQGVDDLLDEIDGVLESNAEEFVRAF. Gln-67 is subject to Deamidated glutamine. An Isoglutamyl lysine isopeptide (Gln-Lys) (interchain with K-? in acceptor proteins) cross-link involves residue Gln-67.

It belongs to the prokaryotic ubiquitin-like protein family. Strongly interacts with the proteasome-associated ATPase ARC through a hydrophobic interface; the interacting region of Pup lies in its C-terminal half. There is one Pup binding site per ARC hexamer ring. In terms of processing, is modified by deamidation of its C-terminal glutamine to glutamate by the deamidase Dop, a prerequisite to the subsequent pupylation process.

The protein operates within protein degradation; proteasomal Pup-dependent pathway. Protein modifier that is covalently attached to lysine residues of substrate proteins, thereby targeting them for proteasomal degradation. The tagging system is termed pupylation. The chain is Prokaryotic ubiquitin-like protein Pup from Arthrobacter sp. (strain FB24).